Consider the following 210-residue polypeptide: Somatotropin (210 aa).

A signal peptide spans 1–23 (MARALVLLSVVLVSLLVNQGTAS). A Zn(2+)-binding site is contributed by histidine 38. Cysteine 71 and cysteine 183 are disulfide-bonded. A Zn(2+)-binding site is contributed by glutamate 192. Cysteine 200 and cysteine 208 form a disulfide bridge.

This sequence belongs to the somatotropin/prolactin family.

It localises to the secreted. Functionally, growth hormone plays an important role in growth control. This is Somatotropin (gh) from Ctenopharyngodon idella (Grass carp).